A 457-amino-acid chain; its full sequence is Heme sensor protein HssS (457 aa).

Transmembrane regions (helical) follow at residues 9–29 (IAIYSITVILFSALISFVLTN) and 164–184 (TFLAVLLMLLLFISISLVIAS). The region spanning 186 to 238 (YSIIRPVKKLKLATERLIDGDFETPIKQTRKDEIGTLQYHFNKMRESLGQVDQ) is the HAMP domain. The region spanning 246–456 (NVSHEIKTPL…TFTITLPNNS (211 aa)) is the Histidine kinase domain. At H249 the chain carries Phosphohistidine; by autocatalysis.

In terms of processing, autophosphorylated.

The protein resides in the cell membrane. The catalysed reaction is ATP + protein L-histidine = ADP + protein N-phospho-L-histidine.. In terms of biological role, member of the two-component regulatory system HssS/HssR involved in intracellular heme homeostasis and tempering of staphylococcal virulence. HssS functions as a heme sensor histidine kinase which is autophosphorylated at a histidine residue and transfers its phosphate group to an aspartate residue of HssR. HssR/HssS activates the expression of hrtAB, an efflux pump, in response to extracellular heme, hemin, hemoglobin or blood. The chain is Heme sensor protein HssS (hssS) from Staphylococcus aureus (strain MSSA476).